We begin with the raw amino-acid sequence, 324 residues long: Stomatin-like protein stl-1 (324 aa).

The protein belongs to the band 7/mec-2 family. As to expression, widely expressed in most tissues, including body wall muscles, intestinal epithelia, and pharynx and head neurons.

It localises to the mitochondrion. In terms of biological role, mitochondrial protein that probably regulates the biogenesis and the activity of mitochondria. In neurons, involved in mitochondrial fusion and recovery of normal locomotory behavior during reoxygenation; probably acts independently of egl-9 and the canonical hypoxia response pathway. The polypeptide is Stomatin-like protein stl-1 (Caenorhabditis elegans).